We begin with the raw amino-acid sequence, 418 residues long: Elongation factor 1-gamma 2 (418 aa).

Residues 1–82 (MALVLHAGSG…YVTRSKADNP (82 aa)) form the GST N-terminal domain. Positions 87 to 215 (SLIEYAHIEQ…VKQAESVPPV (129 aa)) constitute a GST C-terminal domain. Residues 210–265 (ESVPPVQKKAPPPKEQKPKEAKKEAPKEAPKPKAVEKPEEEEEAPKPKPKNPLDLL) form a disordered region. The span at 221–246 (PPKEQKPKEAKKEAPKEAPKPKAVEK) shows a compositional bias: basic and acidic residues. Positions 258–418 (PKNPLDLLPP…ESLLDAKCFK (161 aa)) constitute an EF-1-gamma C-terminal domain.

As to quaternary structure, EF-1 is composed of four subunits: alpha, beta, delta, and gamma.

Functionally, probably plays a role in anchoring the complex to other cellular components. This chain is Elongation factor 1-gamma 2, found in Oryza sativa subsp. japonica (Rice).